A 270-amino-acid chain; its full sequence is Bis(5'-nucleosyl)-tetraphosphatase, symmetrical (270 aa).

Belongs to the Ap4A hydrolase family.

It carries out the reaction P(1),P(4)-bis(5'-adenosyl) tetraphosphate + H2O = 2 ADP + 2 H(+). Its function is as follows. Hydrolyzes diadenosine 5',5'''-P1,P4-tetraphosphate to yield ADP. This is Bis(5'-nucleosyl)-tetraphosphatase, symmetrical from Actinobacillus pleuropneumoniae serotype 3 (strain JL03).